The sequence spans 88 residues: Arminin 1a (88 aa).

An N-terminal signal peptide occupies residues Met-1–Ala-18. Positions Glu-19 to Ala-57 are excised as a propeptide. Val-85 is modified (valine amide).

The protein belongs to the arminin family. Expressed in entodermal epithelium along the body column.

Its subcellular location is the secreted. It is found in the target cell membrane. Functionally, antimicrobial peptide with a broad-spectrum antimicrobial activity. Shows very strong bactericidal activity against B.megaterium (MBC=0.1 uM), E.coli (MBC=0.2 uM), S.aureus (MBC=0.4 uM), methicillin-resistant S.aureus (MRSA) (MBC=0.4-0.8 uM), vancomycin-resistant enterococci (VRE) (E.faecalis (MBC=1.6 uM), and E.faecium (MBC=0.4-0.8 uM)), and extended-spectrum beta-lactamase (ESBL)-producing enterobacteriaceae strains (K.pneumoniae (MBC=0.4-0.8 uM), E.coli (MBC=0.2-0.4 uM)). Keeps its antibacterial activity under a wide range of salt concentrations that mimic physiological conditions of human blood, which is surprising, since Hydra is an obligate freshwater animal with nearly no salt tolerance. Does not affect red blood cells. This is Arminin 1a from Hydra vulgaris (Hydra).